Consider the following 763-residue polypeptide: MEDNSEQASVSSQASMRPLVSDNGDREAGAGVEVNIANDNDTSVGVDGENGNEDDDPILSKYHNACQRGDLEVVREMIHGGQVNVSSDADREGVTGLHWAAINNRLNVVDFLVREGANVESKAGALEATPLHWAARYGFVYVVDYLLQHGASATTTDKQGFNLLHLSVNSSNIMLVVYVLFFVVSKGIIDIDYVDPKGRTALLWAAYQGDSLTVAALIKFNASVKIADEGGFTPLHWGTVKGQPHVLKYLIQDGADFFQKTNDNKDCFVIAEEMSNTHSFQEALRHNNFDKNGYPINKLVKRDDHAKIITFLIPLLVLGFAFFGFSHLHILFALPVIILLLLASNKFIKSFLLPSYETKGTNSASLLKSPLIAGILFGSIFWLAFVWILRILPYTFTKRPLGNLTFCAILCFVCYSLFLLAFSDPGHIGSENDHEKIRETISNLLKEGKFDTRSFCLETWVRKPLRSKYSYLNDALILRFDHYCPWIYNDVGLKNHKLFIFFILALELGIFSFVKVCLKYFDELDMDGDCFILGDDDLCSGLIGDRFTFLIMTWACIQAVWIFSLVIVQLFQITKGLTNSELNALIREGRRVDIDSQTHNEFFNTVPEGFINNKDTEEEAAPPVRNNTNERISTTFSGNLPKPRTCMGMICAVTGLHQCVAIIKDTFGIARHGSSRSTNTRSLLSSISTDYGWRRNWCDFWLLSDTNTPLWKRIFFSPPSTKALLNGKEADYATLYEVPNKNHGSVSQLQELQDPLSEIDDMV.

Positions 1 to 15 (MEDNSEQASVSSQAS) are enriched in polar residues. The tract at residues 1-59 (MEDNSEQASVSSQASMRPLVSDNGDREAGAGVEVNIANDNDTSVGVDGENGNEDDDPIL) is disordered. Residues 1 to 307 (MEDNSEQASV…KLVKRDDHAK (307 aa)) are Cytoplasmic-facing. 7 ANK repeats span residues 57 to 87 (PILS…NVSS), 92 to 121 (EGVT…NVES), 126 to 155 (LEAT…SATT), 159 to 188 (QGFN…SKGI), 197 to 226 (KGRT…SVKI), 230 to 259 (GGFT…DFFQ), and 292 to 322 (NGYP…GFAF). The helical transmembrane segment at 308–325 (IITFLIPLLVLGFAFFGF) threads the bilayer. Over 326–330 (SHLHI) the chain is Lumenal. The helical transmembrane segment at 331 to 348 (LFALPVIILLLLASNKFI) threads the bilayer. At 349-368 (KSFLLPSYETKGTNSASLLK) the chain is on the cytoplasmic side. A helical membrane pass occupies residues 369 to 389 (SPLIAGILFGSIFWLAFVWIL). At 390–401 (RILPYTFTKRPL) the chain is on the lumenal side. A helical membrane pass occupies residues 402-422 (GNLTFCAILCFVCYSLFLLAF). The Cytoplasmic segment spans residues 423–497 (SDPGHIGSEN…YNDVGLKNHK (75 aa)). The region spanning 454 to 504 (SFCLETWVRKPLRSKYSYLNDALILRFDHYCPWIYNDVGLKNHKLFIFFIL) is the DHHC domain. The active-site S-palmitoyl cysteine intermediate is C484. Residues 498-518 (LFIFFILALELGIFSFVKVCL) form a helical membrane-spanning segment. The Lumenal segment spans residues 519-546 (KYFDELDMDGDCFILGDDDLCSGLIGDR). The chain crosses the membrane as a helical span at residues 547–567 (FTFLIMTWACIQAVWIFSLVI). Over 568–763 (VQLFQITKGL…DPLSEIDDMV (196 aa)) the chain is Cytoplasmic.

Belongs to the DHHC palmitoyltransferase family. AKR/ZDHHC17 subfamily.

The protein localises to the early endosome membrane. The protein resides in the golgi apparatus membrane. The catalysed reaction is L-cysteinyl-[protein] + hexadecanoyl-CoA = S-hexadecanoyl-L-cysteinyl-[protein] + CoA. Its function is as follows. Palmitoyltransferase specific for casein kinase 1. In Candida glabrata (strain ATCC 2001 / BCRC 20586 / JCM 3761 / NBRC 0622 / NRRL Y-65 / CBS 138) (Yeast), this protein is Palmitoyltransferase AKR1 (AKR1).